We begin with the raw amino-acid sequence, 79 residues long: Small ribosomal subunit protein bS18 (79 aa).

It belongs to the bacterial ribosomal protein bS18 family. As to quaternary structure, part of the 30S ribosomal subunit. Forms a tight heterodimer with protein bS6.

Its function is as follows. Binds as a heterodimer with protein bS6 to the central domain of the 16S rRNA, where it helps stabilize the platform of the 30S subunit. The chain is Small ribosomal subunit protein bS18 from Onion yellows phytoplasma (strain OY-M).